The chain runs to 91 residues: Protein RacC (91 aa).

This chain is Protein RacC (racC), found in Escherichia coli (strain K12).